We begin with the raw amino-acid sequence, 555 residues long: Potassium-transporting ATPase potassium-binding subunit (555 aa).

Transmembrane regions (helical) follow at residues 2–22 (IWVAVVITMLLFILVAKPTGI), 60–80 (QYALSLVLLNGFMIVVVYFIF), 130–150 (IGITFLMFAAPATTLALVMAF), 173–193 (VFLPIAFVTALVFVALGVPQT), 246–266 (MSNILQMMLMMLLPTALPFTY), 278–298 (ILFVSLFMVFLLGFITITTSE), 374–394 (AGFVNIITYAIIAVFISGLMV), 412–432 (LIAVTILFHPLLILGFSALAL), 483–503 (LVMFLGRYFSLVTMLAVAASL), and 525–545 (GIFIGTIVIVGALTFFPMLVL).

This sequence belongs to the KdpA family. In terms of assembly, the system is composed of three essential subunits: KdpA, KdpB and KdpC.

It is found in the cell membrane. Its function is as follows. Part of the high-affinity ATP-driven potassium transport (or Kdp) system, which catalyzes the hydrolysis of ATP coupled with the electrogenic transport of potassium into the cytoplasm. This subunit binds the extracellular potassium ions and delivers the ions to the membrane domain of KdpB through an intramembrane tunnel. This is Potassium-transporting ATPase potassium-binding subunit from Bacillus thuringiensis subsp. konkukian (strain 97-27).